The primary structure comprises 271 residues: Putative phosphoenolpyruvate synthase regulatory protein (271 aa).

Residue Gly151–Thr158 coordinates ADP.

It belongs to the pyruvate, phosphate/water dikinase regulatory protein family. PSRP subfamily.

The catalysed reaction is [pyruvate, water dikinase] + ADP = [pyruvate, water dikinase]-phosphate + AMP + H(+). The enzyme catalyses [pyruvate, water dikinase]-phosphate + phosphate + H(+) = [pyruvate, water dikinase] + diphosphate. In terms of biological role, bifunctional serine/threonine kinase and phosphorylase involved in the regulation of the phosphoenolpyruvate synthase (PEPS) by catalyzing its phosphorylation/dephosphorylation. This Burkholderia thailandensis (strain ATCC 700388 / DSM 13276 / CCUG 48851 / CIP 106301 / E264) protein is Putative phosphoenolpyruvate synthase regulatory protein.